The primary structure comprises 88 residues: Large ribosomal subunit protein eL37 (88 aa).

Residues 1-24 form a disordered region; it reads MTKGTTSFGKRHNKSHTQCRRCGR. Positions 9-24 are enriched in basic residues; sequence GKRHNKSHTQCRRCGR. Positions 19, 22, 34, and 37 each coordinate Zn(2+). The segment at 19–37 adopts a C4-type zinc-finger fold; that stretch reads CRRCGRKSYHIQKKTCSSC.

It belongs to the eukaryotic ribosomal protein eL37 family. Zn(2+) is required as a cofactor.

Its function is as follows. Binds to the 23S rRNA. The chain is Large ribosomal subunit protein eL37 (RPL37) from Schistosoma mansoni (Blood fluke).